A 274-amino-acid polypeptide reads, in one-letter code: Large ribosomal subunit protein uL2 (274 aa).

Disordered regions lie at residues 35-60 (EPQH…GHKH) and 224-274 (VMNP…RRKK). Residues 50-60 (TTRHKGGGHKH) are compositionally biased toward basic residues. Positions 229–246 (DHPHGGGEGKTGEGRHAV) are enriched in basic and acidic residues.

Belongs to the universal ribosomal protein uL2 family. Part of the 50S ribosomal subunit. Forms a bridge to the 30S subunit in the 70S ribosome.

In terms of biological role, one of the primary rRNA binding proteins. Required for association of the 30S and 50S subunits to form the 70S ribosome, for tRNA binding and peptide bond formation. It has been suggested to have peptidyltransferase activity; this is somewhat controversial. Makes several contacts with the 16S rRNA in the 70S ribosome. This is Large ribosomal subunit protein uL2 from Delftia acidovorans (strain DSM 14801 / SPH-1).